Here is a 713-residue protein sequence, read N- to C-terminus: DNA polymerase eta (713 aa).

Residues 9 to 259 (VALVDMDCFF…MPIRKIRSLG (251 aa)) enclose the UmuC domain. Residues aspartate 13 and methionine 14 each contribute to the Mg(2+) site. 2 residues coordinate Mn(2+): aspartate 13 and methionine 14. Arginine 61 lines the a 2'-deoxyribonucleoside 5'-triphosphate pocket. Residues aspartate 115 and glutamate 116 each contribute to the Mg(2+) site. Mn(2+) is bound by residues aspartate 115 and glutamate 116. 2 disordered regions span residues 441–472 (TSFL…AVTA) and 495–527 (EASL…QSTG). Polar residues-rich tracts occupy residues 456 to 466 (VTSSEAKTQGS) and 497 to 527 (SLSS…QSTG). The UBZ3-type zinc-finger motif lies at 628–662 (AAEDQVPCEKCGSLVPVWDMPEHMDYHFALELQKS). Zn(2+) contacts are provided by cysteine 635, cysteine 638, histidine 650, and histidine 654. The tract at residues 677–705 (VSHQGKRNPKSPLACTNKRPRPEGMQTLE) is disordered. Glycyl lysine isopeptide (Lys-Gly) (interchain with G-Cter in ubiquitin) cross-links involve residues lysine 682, lysine 686, and lysine 694. A PIP-box motif is present at residues 701–708 (MQTLESFF). Lysine 709 participates in a covalent cross-link: Glycyl lysine isopeptide (Lys-Gly) (interchain with G-Cter in ubiquitin).

This sequence belongs to the DNA polymerase type-Y family. As to quaternary structure, interacts with REV1. Interacts with monoubiquitinated PCNA, but not unmodified PCNA. Interacts with POLI; this interaction targets POLI to the replication machinery. Interacts with PALB2 and BRCA2; the interactions are direct and are required to sustain the recruitment of POLH at blocked replication forks and to stimulate POLH-dependent DNA synthesis on D loop substrates. Interacts (via C-terminus) with TRAIP. Interacts with ubiquitin. Interacts with POLDIP2. Mg(2+) is required as a cofactor. Requires Mn(2+) as cofactor. Monoubiquitinated by RCHY1/PIRH2. Ubiquitination depends on integrity of the UBZ3-type zinc finger domain and is enhanced by TRAIP. Ubiquitination inhibits the ability of PolH to interact with PCNA and to bypass UV-induced lesions.

It localises to the nucleus. The enzyme catalyses DNA(n) + a 2'-deoxyribonucleoside 5'-triphosphate = DNA(n+1) + diphosphate. The enzyme in complex with the DNA substrate binds a third divalent metal cation. The binding of this third divalent cation, which is coordinated by water molecules and two oxygen atoms from DNA and dNTP, is essential for catalyzing the DNA synthesis. In terms of biological role, DNA polymerase specifically involved in the DNA repair by translesion synthesis (TLS). Due to low processivity on both damaged and normal DNA, cooperates with the heterotetrameric (REV3L, REV7, POLD2 and POLD3) POLZ complex for complete bypass of DNA lesions. Inserts one or 2 nucleotide(s) opposite the lesion, the primer is further extended by the tetrameric POLZ complex. In the case of 1,2-intrastrand d(GpG)-cisplatin cross-link, inserts dCTP opposite the 3' guanine. Particularly important for the repair of UV-induced pyrimidine dimers. Although inserts the correct base, may cause base transitions and transversions depending upon the context. May play a role in hypermutation at immunoglobulin genes. Forms a Schiff base with 5'-deoxyribose phosphate at abasic sites, but does not have any lyase activity, preventing the release of the 5'-deoxyribose phosphate (5'-dRP) residue. This covalent trapping of the enzyme by the 5'-dRP residue inhibits its DNA synthetic activity during base excision repair, thereby avoiding high incidence of mutagenesis. Targets POLI to replication foci. This is DNA polymerase eta (POLH) from Homo sapiens (Human).